A 2128-amino-acid chain; its full sequence is Non-reducing polyketide synthase albA (2128 aa).

The tract at residues 8–244 (YLFGDQTSDI…VKAPIHGPYH (237 aa)) is N-terminal acylcarrier protein transacylase domain (SAT). A Ketosynthase family 3 (KS3) domain is found at 375–806 (NSKIAIIGMS…GGNTALLLED (432 aa)). Residues C547, H682, and H724 each act as for beta-ketoacyl synthase activity in the active site. Residues 912–1232 (FVFTGQGAQY…LASLHLAGID (321 aa)) are malonyl-CoA:ACP transacylase (MAT) domain. Residue S1001 is the For acyl/malonyl transferase activity of the active site. The interval 1286 to 1425 (HEYLTTAAQK…CTVRFFDCAA (140 aa)) is N-terminal hotdog fold. The 313-residue stretch at 1286-1598 (HEYLTTAAQK…FQALSRKILD (313 aa)) folds into the PKS/mFAS DH domain. Residues 1290–1603 (TTAAQKVIET…RKILDTVLPP (314 aa)) are product template (PT) domain. H1326 serves as the catalytic Proton acceptor; for dehydratase activity. Residues 1452–1598 (DAHRLGRGMV…FQALSRKILD (147 aa)) are C-terminal hotdog fold. D1511 (proton donor; for dehydratase activity) is an active-site residue. Residues 1618–1695 (PSAPSLVKRA…DFKQFLAPMS (78 aa)) enclose the Carrier 1 domain. At S1655 the chain carries O-(pantetheine 4'-phosphoryl)serine. The disordered stretch occupies residues 1695–1740 (SQGEASDGSTSDPESSSSFNGGSSTDESSAGSPVSSPPNEKVTQVE). Residues 1700–1723 (SDGSTSDPESSSSFNGGSSTDESS) are compositionally biased toward low complexity. Polar residues predominate over residues 1724 to 1740 (AGSPVSSPPNEKVTQVE). In terms of domain architecture, Carrier 2 spans 1739 to 1816 (VEQHATIKEI…DVEDALGLKP (78 aa)). S1776 carries the O-(pantetheine 4'-phosphoryl)serine modification. The interval 1854–2126 (SPHPRSTSIL…ELGSFIGNAM (273 aa)) is claisen cyclase domain. The active-site For Claisen cyclase activity is S1944.

It carries out the reaction 6 malonyl-CoA + acetyl-CoA + 6 H(+) = naphtopyrone YWA1 + 6 CO2 + 7 CoA + H2O. Its pathway is secondary metabolite biosynthesis. In terms of biological role, non-reducing polyketide synthase; part of the gene cluster that mediates the biosynthesis of aurasperone B, a dimeric gamma-naphthopyrone. The first step in the biosynthesis of aurasperone B is the production of gamma-naphthopyrone precursor YWA1 by the non-reducing polyketide synthase albA, via condensation of one acetyl-CoA starter unit with 6 malonyl-CoA units. YWA1 is then methylated by aunE at position C-6 to yield foncesin which is further methylated at position C-8 by aunD to produce fonsecin B. A key enzyme in the biosynthetic pathway is the cytochrome P450 monooxygenase aunB which catalyzes the oxidative dimerization of fonsecin B to aurasperone B. AunB also catalyzes the oxidative dimerization of rubrofusarin B into aurasperone A. The polypeptide is Non-reducing polyketide synthase albA (Aspergillus niger (strain ATCC 1015 / CBS 113.46 / FGSC A1144 / LSHB Ac4 / NCTC 3858a / NRRL 328 / USDA 3528.7)).